A 121-amino-acid chain; its full sequence is Large ribosomal subunit protein uL24 (121 aa).

This sequence belongs to the universal ribosomal protein uL24 family. Part of the 50S ribosomal subunit.

Functionally, one of two assembly initiator proteins, it binds directly to the 5'-end of the 23S rRNA, where it nucleates assembly of the 50S subunit. Located at the polypeptide exit tunnel on the outside of the subunit. The polypeptide is Large ribosomal subunit protein uL24 (Thermococcus kodakarensis (strain ATCC BAA-918 / JCM 12380 / KOD1) (Pyrococcus kodakaraensis (strain KOD1))).